The sequence spans 195 residues: Large ribosomal subunit protein uL11m (195 aa).

This sequence belongs to the universal ribosomal protein uL11 family. As to quaternary structure, component of the mitochondrial ribosome large subunit (39S) which comprises a 16S rRNA and about 50 distinct proteins.

It localises to the mitochondrion. This is Large ribosomal subunit protein uL11m (mrpl-11) from Caenorhabditis elegans.